Consider the following 230-residue polypeptide: Small ribosomal subunit protein uS3 (230 aa).

Positions 39–107 constitute a KH type-2 domain; it reads IRKFLTEKLK…PAQINISEVR (69 aa).

The protein belongs to the universal ribosomal protein uS3 family. As to quaternary structure, part of the 30S ribosomal subunit. Forms a tight complex with proteins S10 and S14.

Binds the lower part of the 30S subunit head. Binds mRNA in the 70S ribosome, positioning it for translation. The chain is Small ribosomal subunit protein uS3 from Psychromonas ingrahamii (strain DSM 17664 / CCUG 51855 / 37).